We begin with the raw amino-acid sequence, 451 residues long: MREAICIHIGQAGCQVGNACWELFCLEHGIQPDGAMPSDKTIGVEDDAFNTFFSETGAGKHVPRAVFLDLEPTVVDEIRTGTYRQLFHPEQLISGKEDAANNYARGHYTIGKEIVDLCLDRIRKLADNCTGLQGFLVYHAVGGGTGSGLGALLLERLSVDYGKKSKLGYTVYPSPQVSTAVVEPYNSVLSTHSLLEHTDVAAMLDNEAIYDLTRANLDIERPTYTNLNRLIGQVVSALTASLRFDGALNVDLTEFQTNLVPYPRIHFVLTTYAPVISAEKAYHEQLSVSEISNAVFEPASMMTKCDPRHGKYMACCLMYRGDVVPKDVNAAVATIKTKRTIQFVDWSPTGFKCGINYQPPTVVPGGDLAKVQRAVCMIANSTAIAEVFARIDHKFDLMYSKRAFVHWYVGEGMEEGEFSEAREDLAALEKDYEEVGAESADMEGEEDVEEY.

Gln-11 is a binding site for GTP. An N6-acetyllysine modification is found at Lys-40. GTP is bound by residues Glu-71, Gly-144, Thr-145, Thr-179, Asn-206, and Asn-228. A Mg(2+)-binding site is contributed by Glu-71. Glu-254 is a catalytic residue.

It belongs to the tubulin family. As to quaternary structure, dimer of alpha and beta chains. A typical microtubule is a hollow water-filled tube with an outer diameter of 25 nm and an inner diameter of 15 nM. Alpha-beta heterodimers associate head-to-tail to form protofilaments running lengthwise along the microtubule wall with the beta-tubulin subunit facing the microtubule plus end conferring a structural polarity. Microtubules usually have 13 protofilaments but different protofilament numbers can be found in some organisms and specialized cells. Mg(2+) serves as cofactor. Undergoes a tyrosination/detyrosination cycle, the cyclic removal and re-addition of a C-terminal tyrosine residue by the enzymes tubulin tyrosine carboxypeptidase (TTCP) and tubulin tyrosine ligase (TTL), respectively. Post-translationally, acetylation of alpha chains at Lys-40 stabilizes microtubules and affects affinity and processivity of microtubule motors. This modification has a role in multiple cellular functions, ranging from cell motility, cell cycle progression or cell differentiation to intracellular trafficking and signaling.

Its subcellular location is the cytoplasm. It is found in the cytoskeleton. It carries out the reaction GTP + H2O = GDP + phosphate + H(+). Tubulin is the major constituent of microtubules, a cylinder consisting of laterally associated linear protofilaments composed of alpha- and beta-tubulin heterodimers. Microtubules grow by the addition of GTP-tubulin dimers to the microtubule end, where a stabilizing cap forms. Below the cap, tubulin dimers are in GDP-bound state, owing to GTPase activity of alpha-tubulin. The sequence is that of Tubulin alpha chain from Trypanosoma cruzi.